The following is a 257-amino-acid chain: Putative hydro-lyase Bcep18194_B2576 (257 aa).

The protein belongs to the D-glutamate cyclase family.

The polypeptide is Putative hydro-lyase Bcep18194_B2576 (Burkholderia lata (strain ATCC 17760 / DSM 23089 / LMG 22485 / NCIMB 9086 / R18194 / 383)).